The primary structure comprises 639 residues: Mediator of RNA polymerase II transcription subunit 17 (639 aa).

Belongs to the Mediator complex subunit 17 family. In terms of assembly, component of the Mediator complex.

It localises to the nucleus. In terms of biological role, component of the Mediator complex, a coactivator involved in the regulated transcription of nearly all RNA polymerase II-dependent genes. Mediator functions as a bridge to convey information from gene-specific regulatory proteins to the basal RNA polymerase II transcription machinery. Mediator is recruited to promoters by direct interactions with regulatory proteins and serves as a scaffold for the assembly of a functional preinitiation complex with RNA polymerase II and the general transcription factors. This Xenopus tropicalis (Western clawed frog) protein is Mediator of RNA polymerase II transcription subunit 17 (med17).